Consider the following 163-residue polypeptide: Aspartate carbamoyltransferase regulatory chain (163 aa).

Positions 113, 118, 143, and 146 each coordinate Zn(2+).

Belongs to the PyrI family. As to quaternary structure, contains catalytic and regulatory chains. The cofactor is Zn(2+).

Functionally, involved in allosteric regulation of aspartate carbamoyltransferase. This is Aspartate carbamoyltransferase regulatory chain from Caldivirga maquilingensis (strain ATCC 700844 / DSM 13496 / JCM 10307 / IC-167).